Here is a 504-residue protein sequence, read N- to C-terminus: ATP synthase subunit beta (504 aa).

181–188 contributes to the ATP binding site; the sequence is GGAGVGKT.

This sequence belongs to the ATPase alpha/beta chains family. In terms of assembly, F-type ATPases have 2 components, CF(1) - the catalytic core - and CF(0) - the membrane proton channel. CF(1) has five subunits: alpha(3), beta(3), gamma(1), delta(1), epsilon(1). CF(0) has three main subunits: a(1), b(2) and c(9-12). The alpha and beta chains form an alternating ring which encloses part of the gamma chain. CF(1) is attached to CF(0) by a central stalk formed by the gamma and epsilon chains, while a peripheral stalk is formed by the delta and b chains.

The protein resides in the cell inner membrane. It catalyses the reaction ATP + H2O + 4 H(+)(in) = ADP + phosphate + 5 H(+)(out). Produces ATP from ADP in the presence of a proton gradient across the membrane. The catalytic sites are hosted primarily by the beta subunits. The chain is ATP synthase subunit beta from Ehrlichia ruminantium (strain Gardel).